The following is a 168-amino-acid chain: Large ribosomal subunit protein uL10 (168 aa).

Belongs to the universal ribosomal protein uL10 family. In terms of assembly, part of the ribosomal stalk of the 50S ribosomal subunit. The N-terminus interacts with L11 and the large rRNA to form the base of the stalk. The C-terminus forms an elongated spine to which L12 dimers bind in a sequential fashion forming a multimeric L10(L12)X complex.

Forms part of the ribosomal stalk, playing a central role in the interaction of the ribosome with GTP-bound translation factors. The sequence is that of Large ribosomal subunit protein uL10 from Photorhabdus laumondii subsp. laumondii (strain DSM 15139 / CIP 105565 / TT01) (Photorhabdus luminescens subsp. laumondii).